Here is a 469-residue protein sequence, read N- to C-terminus: Probable Xaa-Pro aminopeptidase PEPP (469 aa).

Positions 265, 276, 399, and 439 each coordinate Mn(2+).

The protein belongs to the peptidase M24B family. It depends on Mn(2+) as a cofactor.

The enzyme catalyses Release of any N-terminal amino acid, including proline, that is linked to proline, even from a dipeptide or tripeptide.. Catalyzes the removal of a penultimate prolyl residue from the N-termini of peptides. This chain is Probable Xaa-Pro aminopeptidase PEPP (PEPP), found in Coccidioides posadasii (strain C735) (Valley fever fungus).